Consider the following 111-residue polypeptide: Putative single-stranded DNA-binding protein ycf41 (111 aa).

Positions Met-1–Lys-98 constitute an SSB domain.

Its subcellular location is the plastid. The protein resides in the chloroplast. This Pyropia yezoensis (Susabi-nori) protein is Putative single-stranded DNA-binding protein ycf41 (ycf41).